Reading from the N-terminus, the 115-residue chain is MTLDPKIAARLKRNADGLVTAVVQERGSGDVLMVAWMNDEALARTLQTREATYYSRSRAEQWVKGATSGHTQHVHSVRLDCDGDAVLLTVDQVGGACHTGDHSCFDAAVLLEPDD.

Residue aspartate 80 participates in Mg(2+) binding. A Zn(2+)-binding site is contributed by cysteine 81. Aspartate 82 and aspartate 84 together coordinate Mg(2+). Zn(2+) contacts are provided by cysteine 97 and cysteine 104.

Belongs to the PRA-CH family. Homodimer. Mg(2+) serves as cofactor. The cofactor is Zn(2+).

The protein resides in the cytoplasm. The enzyme catalyses 1-(5-phospho-beta-D-ribosyl)-5'-AMP + H2O = 1-(5-phospho-beta-D-ribosyl)-5-[(5-phospho-beta-D-ribosylamino)methylideneamino]imidazole-4-carboxamide. It participates in amino-acid biosynthesis; L-histidine biosynthesis; L-histidine from 5-phospho-alpha-D-ribose 1-diphosphate: step 3/9. In terms of biological role, catalyzes the hydrolysis of the adenine ring of phosphoribosyl-AMP. This chain is Phosphoribosyl-AMP cyclohydrolase, found in Mycobacterium bovis (strain ATCC BAA-935 / AF2122/97).